The sequence spans 143 residues: uncharacterized protein (143 aa).

This sequence belongs to the SufE family.

This is an uncharacterized protein from Mycobacterium tuberculosis (strain CDC 1551 / Oshkosh).